We begin with the raw amino-acid sequence, 357 residues long: Probable dual-specificity RNA methyltransferase RlmN (357 aa).

The active-site Proton acceptor is E92. The Radical SAM core domain maps to 98–330; the sequence is QEYGLSVCVT…KKNGINCVIR (233 aa). The cysteines at positions 105 and 341 are disulfide-linked. [4Fe-4S] cluster contacts are provided by C112, C116, and C119. S-adenosyl-L-methionine is bound by residues 164–165, S196, 219–221, and N297; these read GE and SLH. The active-site S-methylcysteine intermediate is C341.

It belongs to the radical SAM superfamily. RlmN family. The cofactor is [4Fe-4S] cluster.

Its subcellular location is the cytoplasm. It catalyses the reaction adenosine(2503) in 23S rRNA + 2 reduced [2Fe-2S]-[ferredoxin] + 2 S-adenosyl-L-methionine = 2-methyladenosine(2503) in 23S rRNA + 5'-deoxyadenosine + L-methionine + 2 oxidized [2Fe-2S]-[ferredoxin] + S-adenosyl-L-homocysteine. It carries out the reaction adenosine(37) in tRNA + 2 reduced [2Fe-2S]-[ferredoxin] + 2 S-adenosyl-L-methionine = 2-methyladenosine(37) in tRNA + 5'-deoxyadenosine + L-methionine + 2 oxidized [2Fe-2S]-[ferredoxin] + S-adenosyl-L-homocysteine. Its function is as follows. Specifically methylates position 2 of adenine 2503 in 23S rRNA and position 2 of adenine 37 in tRNAs. In Enterococcus faecalis (strain ATCC 700802 / V583), this protein is Probable dual-specificity RNA methyltransferase RlmN.